Here is a 361-residue protein sequence, read N- to C-terminus: DNA double-strand break repair protein Mre11 (361 aa).

Residues D7, H9, D48, and N83 each contribute to the Mn(2+) site. H84 functions as the Proton donor in the catalytic mechanism. Residues H176, H204, and H206 each coordinate Mn(2+).

This sequence belongs to the MRE11/RAD32 family. In terms of assembly, homodimer. Forms a heterotetramer composed of two Mre11 subunits and two Rad50 subunits. Mn(2+) is required as a cofactor.

With respect to regulation, nuclease activity is regulated by Rad50. Its function is as follows. Part of the Rad50/Mre11 complex, which is involved in the early steps of DNA double-strand break (DSB) repair. The complex may facilitate opening of the processed DNA ends to aid in the recruitment of HerA and NurA. Mre11 binds to DSB ends and has both double-stranded 3'-5' exonuclease activity and single-stranded endonuclease activity. In Nanoarchaeum equitans (strain Kin4-M), this protein is DNA double-strand break repair protein Mre11.